A 265-amino-acid chain; its full sequence is VSTITFDVGSATISKYTTFLESLRNQAKDPSLKCYGIPMLPNTNPNPKYLLVELNAKLSSGEVKSITLMLRRHNLYVMGYSDPYDNKCRYHIFKDISSTTERKDVETTLCPNASSRVSKNISYDSSYPALENKAGRSRSQVQLGIQILNSDIGKISGVKSFTDKTEAEFLLVAIQMVSEATRFKYIENQVKTNFNRAFYPNAKVLNLEETWGKISMAIHGAKNGAFSKPLELQNADGSKWIVLRVDEIKPDVALLKYVSGSCQAT.

Disulfide bonds link Cys-34-Cys-262 and Cys-88-Cys-110. Asn-120 carries N-linked (GlcNAc...) asparagine glycosylation.

Belongs to the ribosome-inactivating protein family. Type 1 RIP subfamily. Glycosylated. In terms of tissue distribution, seeds.

It carries out the reaction Endohydrolysis of the N-glycosidic bond at one specific adenosine on the 28S rRNA.. Its function is as follows. Inhibits protein synthesis in animal cells. Useful as immunotoxin for pharmacological applications. This is Protein synthesis inhibitor PD-S2 from Phytolacca dioica (Bella sombra tree).